We begin with the raw amino-acid sequence, 1076 residues long: MIESILSGSVRYRWLVLFLTAVVAVIGAWQLNLLPIDVTPDITNKQVQINSVVPTMSPVEVEKRVTYPIETAIAGLNGVESTRSMSRNGFSQVTVIFKESANLYFMRQQVSERLAQARPNLPENVEPQMGPVSTGLGEVFHYSVEYQYPDGTGASIKDGEPGWQSDGSFLTERGERLDDRVSRLAYLRTVQDWIIRPQLRTTPGVADVDSLGGYVKQFVVEPDTGKMAAYGVSYADLARALEDTNLSVGANFIRRSGESYLVRADARIKSADEISRAVIAQRQNVPITVGQVARVKIGGELRSGAASRNGNETVVGSALMLVGANSRTVAQAVGDKLEQISKTLPPGVVIVPTLNRSQLVIATIETVAKNLIEGALLVVAILFALLGNWRAATIAALVIPLSLLVSAIGMNQFHISGNLMSLGALDFGLIIDGAVIIVENSLRRLAERQHREGRLLTLDERLQEVVQSSREMVRPTVYGQLVIFMVFLPCLTFQGVEGKMFSPMVITLMLALASAFVLSLTFVPAMVAVMLRKKVAETEVRVIVATKESYRPWLEHAVARPMPFIGAGIATVAVATVAFTFVGREFMPTLDELNLNLSSVRIPSTSIDQSVAIDLPLERAVLSLPEVQTVYSKAGTASLAADPMPPNASDNYIILKPKSEWPEGVTTKEQVIERIREKTAPMVGNNYDVTQPIEMRFNELIGGVRSDVAVKVYGENLDELAATAQRIAAVLKKTPGATDVRVPLTSGFPTFDIVFDRAAIARYGLTVKEVADTISTAMAGRPAGQIFDGDRRFDIVIRLPGEQRENLDVLGALPVMLPLSEGQARASVPLRQLVQFRFTQGLNEVSRDNGKRRVYVEANVGGRDLGSFVDDAAARIAKEVKLPPGMYIEWGGQFQNLQAATKRLAIIVPLCFILIAATLYMAIGSAALTATVLTAVPLALAGGVFALLLRGIPFSISAAVGFIAVSGVAVLNGLVLISAIRKRLDDGMAPDAAVIEGAMERVRPVLMTALVASLGFVPMAIATGTGAEVQKPLATVVIGGLVTATVLTLFVLPALCGIVLKRRTAGRPEAQAALEA.

12 consecutive transmembrane segments (helical) span residues 14–34 (WLVL…LNLL), 366–386 (TVAK…FALL), 390–410 (RAAT…AIGM), 418–438 (NLMS…VIIV), 475–495 (PTVY…TFQG), 502–522 (SPMV…SLTF), 561–581 (PMPF…AFTF), 903–923 (RLAI…YMAI), 928–948 (LTAT…FALL), 959–979 (AVGF…LISA), 1003–1023 (RPVL…AIAT), and 1035–1055 (TVVI…LPAL).

The protein belongs to the resistance-nodulation-cell division (RND) (TC 2.A.6) family.

The protein resides in the cell inner membrane. In terms of biological role, the products of the genes cnrA, cnrB, and cnrC are likely to form a membrane-bound protein complex catalyzing an energy-dependent efflux of Ni(2+) and Co(2+). The mechanism of action of the CnrCBA complex may be that of a proton/cation antiporter. This chain is Nickel and cobalt resistance protein CnrA (cnrA), found in Cupriavidus metallidurans (strain ATCC 43123 / DSM 2839 / NBRC 102507 / CH34) (Ralstonia metallidurans).